The following is a 662-amino-acid chain: Probable conjugal transfer protein TrbE part 2 (662 aa).

307–314 contributes to the ATP binding site; the sequence is GPTGSGKS.

Belongs to the TrbE/VirB4 family.

The polypeptide is Probable conjugal transfer protein TrbE part 2 (trbEB) (Sinorhizobium fredii (strain NBRC 101917 / NGR234)).